A 541-amino-acid chain; its full sequence is Paromamine 6'-oxidase (541 aa).

The interval 1 to 29 is disordered; it reads MKRLRGTLPSDARHAWHPEPLGPAHRDGW. H470 (proton acceptor) is an active-site residue.

Belongs to the GMC oxidoreductase family. FAD serves as cofactor.

The catalysed reaction is 6'''-deamino-6'''-hydroxyneomycin C + O2 = 6'''-deamino-6'''-oxoneomycin C + H2O2. It catalyses the reaction paromamine + O2 = 6'-oxoparomamine + H2O2. It functions in the pathway antibiotic biosynthesis; neomycin biosynthesis. In terms of biological role, glucosaminyl-6'-oxidase involved in the biosynthetic pathway of neomycin by mediating FAD-dependent dehydrogenation of paromamine to 6'-dehydro-6'-oxoparomamine. Works in combination with neamine transaminase to replace the 6-hydroxy group of paromamine with an amino group. Also able to collaborate with neomycin C transaminase to replace the 6'''-hydroxy group of 6'''-hydroxyneomycin C with an amino group. The sequence is that of Paromamine 6'-oxidase (neoG) from Streptomyces fradiae (Streptomyces roseoflavus).